Reading from the N-terminus, the 92-residue chain is MADALDLAPLLAAGWSHDPERGVLSKTFGFETFVAAFGFMTRVALWAEKWNHHPDWSNSYGTVEVSLTSHDAGGLTERDLKLARKIDELAAA.

Belongs to the pterin-4-alpha-carbinolamine dehydratase family.

It carries out the reaction (4aS,6R)-4a-hydroxy-L-erythro-5,6,7,8-tetrahydrobiopterin = (6R)-L-erythro-6,7-dihydrobiopterin + H2O. This is Putative pterin-4-alpha-carbinolamine dehydratase from Cereibacter sphaeroides (strain ATCC 17023 / DSM 158 / JCM 6121 / CCUG 31486 / LMG 2827 / NBRC 12203 / NCIMB 8253 / ATH 2.4.1.) (Rhodobacter sphaeroides).